The following is a 567-amino-acid chain: MLSVKQELLAALADELEKVSPGAGSRAAFESPKVAAHGDLACTAAMQLAKPLKQNPRALGEQLQAALEATPAFQKWVQAIEIAGPGFLNIRLKPAAKQQVVREVLAQGAQYGYQPARGEKVLVEFVSANPTGPLHVGHGRQAAIGDAISHLYATQGWSVHREFYYNDAGVQIDTLTKSTQLRAKGFKPGDDCWPTDSENPLAKNFYNGDYIQDIADAFLAKATVQADDRAFTANGDVEDYENIRQFAVAYLRNEQDKDLQAFNLQFDQYYLESSLYANGHVDATVQRLVANGKTYEQDGALWLKSTDYGDDKDRVMRKQDGTYTYFVPDVAYHIQKFQRGFTKVVNIQGTDHHGTIARVRAGLQAADVGIPQGYPDYVLHTMVRVVRNGEEVKISKRAGSYVTLRDLIEWTSKDAVRFFLLSRKPDTEYTFDVDLAVAQNNDNPVYYVQYAHARICSVLRGWREDYDVAALRDVDLSPLEGPQAQALMLLLAKYPEMLTAAAAGNAPHDVTFYLRDLAAAYHSYYDAERILVDDEAVKQARLALVAATAQVLHNGLAVLGVSAPARM.

The 'HIGH' region signature appears at Ala-128–His-138.

This sequence belongs to the class-I aminoacyl-tRNA synthetase family. As to quaternary structure, monomer.

Its subcellular location is the cytoplasm. The enzyme catalyses tRNA(Arg) + L-arginine + ATP = L-arginyl-tRNA(Arg) + AMP + diphosphate. In Acidovorax ebreus (strain TPSY) (Diaphorobacter sp. (strain TPSY)), this protein is Arginine--tRNA ligase.